The chain runs to 256 residues: Deoxyribose-phosphate aldolase (256 aa).

Asp-102 (proton donor/acceptor) is an active-site residue. Catalysis depends on Lys-165, which acts as the Schiff-base intermediate with acetaldehyde. Lys-197 (proton donor/acceptor) is an active-site residue.

This sequence belongs to the DeoC/FbaB aldolase family. DeoC type 2 subfamily.

The protein localises to the cytoplasm. The enzyme catalyses 2-deoxy-D-ribose 5-phosphate = D-glyceraldehyde 3-phosphate + acetaldehyde. It functions in the pathway carbohydrate degradation; 2-deoxy-D-ribose 1-phosphate degradation; D-glyceraldehyde 3-phosphate and acetaldehyde from 2-deoxy-alpha-D-ribose 1-phosphate: step 2/2. Its function is as follows. Catalyzes a reversible aldol reaction between acetaldehyde and D-glyceraldehyde 3-phosphate to generate 2-deoxy-D-ribose 5-phosphate. The polypeptide is Deoxyribose-phosphate aldolase (Shewanella baltica (strain OS223)).